A 110-amino-acid polypeptide reads, in one-letter code: MSETRAVLRGVRLSVDKGRLVADLIRGKKVDQALNILTFTQKKAAVIIKKVLESAIANAEHNDGADIDELKVKTIFVEQGTTLKRFTARAKGRGNRISKPTCHVYVTVGN.

It belongs to the universal ribosomal protein uL22 family. As to quaternary structure, part of the 50S ribosomal subunit.

Its function is as follows. This protein binds specifically to 23S rRNA; its binding is stimulated by other ribosomal proteins, e.g. L4, L17, and L20. It is important during the early stages of 50S assembly. It makes multiple contacts with different domains of the 23S rRNA in the assembled 50S subunit and ribosome. In terms of biological role, the globular domain of the protein is located near the polypeptide exit tunnel on the outside of the subunit, while an extended beta-hairpin is found that lines the wall of the exit tunnel in the center of the 70S ribosome. This Delftia acidovorans (strain DSM 14801 / SPH-1) protein is Large ribosomal subunit protein uL22.